The primary structure comprises 355 residues: S-methyl-5'-thioadenosine phosphorylase (355 aa).

Residues T45, 91 to 92, and 124 to 125 contribute to the phosphate site; these read RH and SA. M226 is a substrate binding site. S227 serves as a coordination point for phosphate. 250 to 252 provides a ligand contact to substrate; it reads DYD.

This sequence belongs to the PNP/MTAP phosphorylase family. MTAP subfamily. Homotrimer.

Its subcellular location is the cytoplasm. It is found in the nucleus. It carries out the reaction S-methyl-5'-thioadenosine + phosphate = 5-(methylsulfanyl)-alpha-D-ribose 1-phosphate + adenine. It functions in the pathway amino-acid biosynthesis; L-methionine biosynthesis via salvage pathway; S-methyl-5-thio-alpha-D-ribose 1-phosphate from S-methyl-5'-thioadenosine (phosphorylase route): step 1/1. In terms of biological role, catalyzes the reversible phosphorylation of S-methyl-5'-thioadenosine (MTA) to adenine and 5-methylthioribose-1-phosphate. Involved in the breakdown of MTA, a major by-product of polyamine biosynthesis. Responsible for the first step in the methionine salvage pathway after MTA has been generated from S-adenosylmethionine. Has broad substrate specificity with 6-aminopurine nucleosides as preferred substrates. In Emericella nidulans (strain FGSC A4 / ATCC 38163 / CBS 112.46 / NRRL 194 / M139) (Aspergillus nidulans), this protein is S-methyl-5'-thioadenosine phosphorylase.